Consider the following 439-residue polypeptide: Ribosomal protein uS12 methylthiotransferase RimO (439 aa).

An MTTase N-terminal domain is found at 4–114; the sequence is PKVGFVSLGR…VVRAVHGVAP (111 aa). Positions 133-370 constitute a Radical SAM core domain; the sequence is LTPRHYAYLK…MEHQQAISTA (238 aa). Residues Cys-147, Cys-151, and Cys-154 each contribute to the [4Fe-4S] cluster site. Residues 373-439 enclose the TRAM domain; that stretch reads STRVGREIDV…EYDLWGERIA (67 aa).

It belongs to the methylthiotransferase family. RimO subfamily. Requires [4Fe-4S] cluster as cofactor.

Its subcellular location is the cytoplasm. It catalyses the reaction L-aspartate(89)-[ribosomal protein uS12]-hydrogen + (sulfur carrier)-SH + AH2 + 2 S-adenosyl-L-methionine = 3-methylsulfanyl-L-aspartate(89)-[ribosomal protein uS12]-hydrogen + (sulfur carrier)-H + 5'-deoxyadenosine + L-methionine + A + S-adenosyl-L-homocysteine + 2 H(+). In terms of biological role, catalyzes the methylthiolation of an aspartic acid residue of ribosomal protein uS12. This is Ribosomal protein uS12 methylthiotransferase RimO from Bordetella bronchiseptica (strain ATCC BAA-588 / NCTC 13252 / RB50) (Alcaligenes bronchisepticus).